We begin with the raw amino-acid sequence, 387 residues long: Succinate--CoA ligase [ADP-forming] subunit beta (387 aa).

The ATP-grasp domain maps to 9 to 236; it reads KELFAKHNVP…RAATDPLELK (228 aa). Residues Lys-45, 52-54, Ser-94, and Glu-99 each bind ATP; that span reads GRG. The Mg(2+) site is built by Asn-191 and Asp-205. Substrate contacts are provided by residues Asn-256 and 318–320; that span reads GIT.

The protein belongs to the succinate/malate CoA ligase beta subunit family. As to quaternary structure, heterotetramer of two alpha and two beta subunits. The cofactor is Mg(2+).

The catalysed reaction is succinate + ATP + CoA = succinyl-CoA + ADP + phosphate. It carries out the reaction GTP + succinate + CoA = succinyl-CoA + GDP + phosphate. It participates in carbohydrate metabolism; tricarboxylic acid cycle; succinate from succinyl-CoA (ligase route): step 1/1. Functionally, succinyl-CoA synthetase functions in the citric acid cycle (TCA), coupling the hydrolysis of succinyl-CoA to the synthesis of either ATP or GTP and thus represents the only step of substrate-level phosphorylation in the TCA. The beta subunit provides nucleotide specificity of the enzyme and binds the substrate succinate, while the binding sites for coenzyme A and phosphate are found in the alpha subunit. In Mycobacterium marinum (strain ATCC BAA-535 / M), this protein is Succinate--CoA ligase [ADP-forming] subunit beta.